The following is a 134-amino-acid chain: Transmembrane protein 100 (134 aa).

Ser15 carries the post-translational modification Phosphoserine. 2 helical membrane-spanning segments follow: residues 56–76 (CVIP…AVAY) and 84–104 (IISI…ASSA). Ser121 is modified (phosphoserine).

Interacts (via C-terminus) with TRPA1 and TRPV1. Interacts with TASOR.

Its subcellular location is the cell membrane. The protein resides in the membrane. The protein localises to the perikaryon. It is found in the cytoplasm. It localises to the perinuclear region. Its subcellular location is the endoplasmic reticulum. Plays a role during embryonic arterial endothelium differentiation and vascular morphogenesis through the ACVRL1 receptor-dependent signaling pathway upon stimulation by bone morphogenetic proteins, such as GDF2/BMP9 and BMP10. Involved in the regulation of nociception, acting as a modulator of the interaction between TRPA1 and TRPV1, two molecular sensors and mediators of pain signals in dorsal root ganglia (DRG) neurons. Mechanistically, it weakens their interaction, thereby releasing the inhibition of TRPA1 by TRPV1 and increasing the single-channel open probability of the TRPA1-TRPV1 complex. The chain is Transmembrane protein 100 (TMEM100) from Bos taurus (Bovine).